Reading from the N-terminus, the 84-residue chain is Acyl carrier protein homolog (84 aa).

The region spanning 4–79 (HEILLKIKEI…DLVLEVKNLL (76 aa)) is the Carrier domain. S39 is modified (O-(pantetheine 4'-phosphoryl)serine).

4'-phosphopantetheine is transferred from CoA to a specific serine of the apo-ACP-like protein.

It functions in the pathway lipid metabolism; fatty acid biosynthesis. In terms of biological role, carrier of the growing fatty acid chain in fatty acid biosynthesis. The polypeptide is Acyl carrier protein homolog (Mycoplasma genitalium (strain ATCC 33530 / DSM 19775 / NCTC 10195 / G37) (Mycoplasmoides genitalium)).